We begin with the raw amino-acid sequence, 310 residues long: Protein YIP5 (310 aa).

The disordered stretch occupies residues 1-84 (MPSNNSSFLD…VIGQNDNDGL (84 aa)). Residues 10–22 (DIDDDLEGVDDFG) are compositionally biased toward acidic residues. Residues 35–57 (DSPNMNNSTAGKGSEFYNTTGSK) show a composition bias toward polar residues. Residue Ser60 is modified to Phosphoserine. The next 5 helical transmembrane spans lie at 131-151 (TDLY…FTMS), 181-201 (LHSI…TMQV), 220-240 (LISV…ILNI), 249-269 (TVQA…SYFL), and 290-310 (SIIV…FIIF).

It belongs to the YIP1 family. As to quaternary structure, interacts with SNX3, TVP18, TVP23, YIP1 and YIP4. Interacts with SEC4; The C-terminal cysteines in the Rab GTPase SEC4 are essential for the interaction. Interacts with YPT1, YPT6, YPT7, YPT10, YPT11, YPT31, YPT32 and YPT52; These proteins are all Rab GTPases.

It is found in the membrane. Possible role in vesicle-mediated transport. May be involved in proper membrane localization of Rab GTPases. In Saccharomyces cerevisiae (strain ATCC 204508 / S288c) (Baker's yeast), this protein is Protein YIP5 (YIP5).